The primary structure comprises 67 residues: Retron Se72 cold shock-like protein (67 aa).

Residues 1–66 (MENGFVNFYD…KGFKAVAIQK (66 aa)) enclose the CSD domain.

Probable cold shock-like component of antiviral defense system retron Se72, composed of a non-coding RNA (ncRNA), a reverse transcriptase (RT) and this protein. Expression of retron Se72 confers protection against bacteriophage lambda. At multiplicity of infection (MOI) of 0.02 cultures slow growth when infected with lambda but do not collapse, at MOI 2 cultures enter growth stasis. The protein is Retron Se72 cold shock-like protein of Salmonella heidelberg (strain 579083-10).